The sequence spans 71 residues: Defensin 1 (71 aa).

The N-terminal stretch at 1–25 (KTVAGFCIFFLVLFLAQEGVVKTEA) is a signal peptide. Disulfide bonds link C28/C71, C39/C60, and C45/C65.

It belongs to the DEFL family. As to quaternary structure, may form dimers. In terms of processing, not glycosylated. Contains 4 disulfide bonds. Post-translationally, met-61 and Met-63 might be oxidized in some molecules.

Probably has antifungal activity. In Arachis hypogaea (Peanut), this protein is Defensin 1.